We begin with the raw amino-acid sequence, 93 residues long: YcgL domain-containing protein Ssed_2518 (93 aa).

In terms of domain architecture, YcgL spans 1 to 85 (MICAVYKSRR…PKVNLLEQHK (85 aa)).

This is YcgL domain-containing protein Ssed_2518 from Shewanella sediminis (strain HAW-EB3).